A 392-amino-acid polypeptide reads, in one-letter code: Galactokinase (392 aa).

37–40 (EHTD) is a binding site for substrate. ATP is bound by residues serine 71 and 128 to 134 (GSGLSSS). Serine 134 and glutamate 166 together coordinate Mg(2+). Catalysis depends on aspartate 178, which acts as the Proton acceptor. Residue tyrosine 228 coordinates substrate.

The protein belongs to the GHMP kinase family. GalK subfamily.

It is found in the cytoplasm. It catalyses the reaction alpha-D-galactose + ATP = alpha-D-galactose 1-phosphate + ADP + H(+). Its pathway is carbohydrate metabolism; galactose metabolism. Its function is as follows. Catalyzes the transfer of the gamma-phosphate of ATP to D-galactose to form alpha-D-galactose-1-phosphate (Gal-1-P). The polypeptide is Galactokinase (Streptococcus pneumoniae (strain ATCC BAA-255 / R6)).